A 284-amino-acid chain; its full sequence is Cytosolic Fe-S cluster assembly factor NUBP2 homolog (284 aa).

27–34 (GKGGVGKS) contributes to the ATP binding site. [4Fe-4S] cluster-binding residues include Cys-200 and Cys-203.

The protein belongs to the Mrp/NBP35 ATP-binding proteins family. NUBP2/CFD1 subfamily. Heterotetramer of 2 NUBP1 and 2 NUBP2 chains. [4Fe-4S] cluster serves as cofactor.

The protein localises to the cytoplasm. Functionally, component of the cytosolic iron-sulfur (Fe/S) protein assembly (CIA) machinery. Required for maturation of extramitochondrial Fe-S proteins. The NUBP1-NUBP2 heterotetramer forms a Fe-S scaffold complex, mediating the de novo assembly of an Fe-S cluster and its transfer to target apoproteins. This is Cytosolic Fe-S cluster assembly factor NUBP2 homolog from Monosiga brevicollis (Choanoflagellate).